The chain runs to 365 residues: 25S rRNA (uridine(2843)-N(3))-methyltransferase (365 aa).

The protein belongs to the class I-like SAM-binding methyltransferase superfamily.

It localises to the cytoplasm. Its subcellular location is the nucleus. The enzyme catalyses uridine(2843) in 25S rRNA + S-adenosyl-L-methionine = N(3)-methyluridine(2843) in 25S rRNA + S-adenosyl-L-homocysteine + H(+). In terms of biological role, S-adenosyl-L-methionine-dependent methyltransferase that specifically methylates the N(3) position of uridine 2843 (m3U2843) in 25S rRNA. The polypeptide is 25S rRNA (uridine(2843)-N(3))-methyltransferase (BMT6) (Saccharomyces cerevisiae (strain ATCC 204508 / S288c) (Baker's yeast)).